Consider the following 102-residue polypeptide: Putative pterin-4-alpha-carbinolamine dehydratase (102 aa).

This sequence belongs to the pterin-4-alpha-carbinolamine dehydratase family.

It catalyses the reaction (4aS,6R)-4a-hydroxy-L-erythro-5,6,7,8-tetrahydrobiopterin = (6R)-L-erythro-6,7-dihydrobiopterin + H2O. The protein is Putative pterin-4-alpha-carbinolamine dehydratase of Burkholderia ambifaria (strain MC40-6).